The sequence spans 549 residues: Phosphoenolpyruvate carboxykinase (ATP) (549 aa).

250–257 (GLSGTGKT) provides a ligand contact to ATP.

Belongs to the phosphoenolpyruvate carboxykinase (ATP) family. As to quaternary structure, homotetramer.

It catalyses the reaction oxaloacetate + ATP = phosphoenolpyruvate + ADP + CO2. The protein operates within carbohydrate biosynthesis; gluconeogenesis. The polypeptide is Phosphoenolpyruvate carboxykinase (ATP) (PCK1) (Saccharomyces cerevisiae (strain ATCC 204508 / S288c) (Baker's yeast)).